An 85-amino-acid polypeptide reads, in one-letter code: MMIKGMAEDDCADNGIPLPNVTSKILLLVIEYCKKHVVESKEEDLKKWDAEFMKKMEQSILFDVMMAANYLNIQSLLDLTFSNCR.

The segment at M65 to R85 is interaction with the F-box domain of F-box proteins.

It belongs to the SKP1 family. As to quaternary structure, part of a SCF (SKP1-cullin-F-box) protein ligase complex.

The protein localises to the nucleus. Its pathway is protein modification; protein ubiquitination. Its function is as follows. Involved in ubiquitination and subsequent proteasomal degradation of target proteins. Together with CUL1, RBX1 and a F-box protein, it forms a SCF E3 ubiquitin ligase complex. The functional specificity of this complex depends on the type of F-box protein. In the SCF complex, it serves as an adapter that links the F-box protein to CUL1. This chain is SKP1-like protein 6 (ASK6), found in Arabidopsis thaliana (Mouse-ear cress).